The following is a 453-amino-acid chain: Exodeoxyribonuclease 7 large subunit (453 aa).

It belongs to the XseA family. In terms of assembly, heterooligomer composed of large and small subunits.

It localises to the cytoplasm. The catalysed reaction is Exonucleolytic cleavage in either 5'- to 3'- or 3'- to 5'-direction to yield nucleoside 5'-phosphates.. In terms of biological role, bidirectionally degrades single-stranded DNA into large acid-insoluble oligonucleotides, which are then degraded further into small acid-soluble oligonucleotides. This chain is Exodeoxyribonuclease 7 large subunit, found in Geobacter metallireducens (strain ATCC 53774 / DSM 7210 / GS-15).